A 179-amino-acid polypeptide reads, in one-letter code: Phospholipase A2 (179 aa).

Positions methionine 1–alanine 21 are cleaved as a signal peptide. A propeptide spanning residues tryptophan 22–arginine 39 is cleaved from the precursor. The Ca(2+) site is built by tryptophan 47, glycine 49, and glycine 51. Cystine bridges form between cysteine 48/cysteine 70, cysteine 69/cysteine 109, cysteine 76/cysteine 102, cysteine 100/cysteine 133, and cysteine 142/cysteine 150. Residue histidine 73 is part of the active site. Residue aspartate 74 coordinates Ca(2+). Aspartate 103 is a catalytic residue.

This sequence belongs to the phospholipase A2 family. Group III subfamily. Requires Ca(2+) as cofactor. Expressed by the venom gland.

The protein localises to the secreted. It catalyses the reaction a 1,2-diacyl-sn-glycero-3-phosphocholine + H2O = a 1-acyl-sn-glycero-3-phosphocholine + a fatty acid + H(+). Its function is as follows. May potentiate Xylotoxin(1)-Xa1a DRG activation and cell lysis, since the orthologous A.mellifera PA2 potentiates Xylotoxin(1)-Xa1a DRG activation and cell lysis. In vivo, intraplantar injection in mice may potentiate spontaneous pain behaviors and paw swelling caused by Xylotoxin(1)-Xa1a, since the orthologous A.mellifera PA2 shows this effect. PLA2 catalyzes the calcium-dependent hydrolysis of the 2-acyl groups in 3-sn-phosphoglycerides. In Xylocopa aruana (Great carpenter bee), this protein is Phospholipase A2.